The sequence spans 375 residues: Eukaryotic translation initiation factor 3 subunit F (375 aa).

In terms of domain architecture, MPN spans 30–166 (VVIQPQALFS…TRAYISAPVG (137 aa)). Residues 307–375 (LGGESGSGES…EAQNGKEEKK (69 aa)) are disordered. Gly residues predominate over residues 323–332 (QRGGKGGRGG). Composition is skewed to basic and acidic residues over residues 336-345 (TQERSGEEAR) and 358-375 (RSYE…EEKK).

The protein belongs to the eIF-3 subunit F family. In terms of assembly, component of the eukaryotic translation initiation factor 3 (eIF-3) complex.

Its subcellular location is the cytoplasm. Functionally, component of the eukaryotic translation initiation factor 3 (eIF-3) complex, which is involved in protein synthesis of a specialized repertoire of mRNAs and, together with other initiation factors, stimulates binding of mRNA and methionyl-tRNAi to the 40S ribosome. The eIF-3 complex specifically targets and initiates translation of a subset of mRNAs involved in cell proliferation. The protein is Eukaryotic translation initiation factor 3 subunit F of Aspergillus niger (strain ATCC MYA-4892 / CBS 513.88 / FGSC A1513).